Consider the following 404-residue polypeptide: Demethylphylloquinone reductase NdbB (404 aa).

7–43 (RICILGGGFGGLYTALRLGQLSWEGHTPPEIVLVDQR) contacts FAD. Position 159–195 (159–195 (IRIAIVGGGYSGVELAAKLGDRLGERGRIRIIERGKE)) interacts with NADP(+).

Belongs to the NADH dehydrogenase family. It depends on FAD as a cofactor.

The enzyme catalyses demethylphylloquinone + NADPH + H(+) = demethylphylloquinol + NADP(+). It participates in cofactor biosynthesis; phylloquinone biosynthesis. Inhibited by dicumarol. Its function is as follows. Bifunctional oxidoreductase probably ables to act both on prenyl naphthoquinones and on prenyl benzoquinones. Catalyzes the penultimate step in the biosynthesis of vitamin K1. This is Demethylphylloquinone reductase NdbB from Synechocystis sp. (strain ATCC 27184 / PCC 6803 / Kazusa).